The sequence spans 552 residues: Urocanate hydratase (552 aa).

NAD(+) is bound by residues 48-49, Gln-126, 172-174, Glu-192, Arg-197, 238-239, 259-263, 269-270, and Tyr-318; these read GG, GMG, NA, QTSAH, and YV. Residue Cys-406 is part of the active site. Gly-488 lines the NAD(+) pocket.

Belongs to the urocanase family. The cofactor is NAD(+).

The protein localises to the cytoplasm. It carries out the reaction 4-imidazolone-5-propanoate = trans-urocanate + H2O. It functions in the pathway amino-acid degradation; L-histidine degradation into L-glutamate; N-formimidoyl-L-glutamate from L-histidine: step 2/3. Catalyzes the conversion of urocanate to 4-imidazolone-5-propionate. This chain is Urocanate hydratase, found in Herpetosiphon aurantiacus (strain ATCC 23779 / DSM 785 / 114-95).